We begin with the raw amino-acid sequence, 558 residues long: Laccase-4 (558 aa).

The first 24 residues, 1-24 (MGSHMVWFLFLVSFFSVFPAPSES), serve as a signal peptide directing secretion. 2 Plastocyanin-like domains span residues 32–148 (NVVM…PKRG) and 158–308 (NEKV…YSGT). Asn37 and Asn78 each carry an N-linked (GlcNAc...) asparagine glycan. The Cu cation site is built by His82 and His84. Residue Asn114 is glycosylated (N-linked (GlcNAc...) asparagine). 2 residues coordinate Cu cation: His127 and His129. N-linked (GlcNAc...) asparagine glycosylation is found at Asn187, Asn296, Asn323, Asn330, Asn373, Asn383, Asn400, Asn418, and Asn441. The 135-residue stretch at 408-542 (DFPKNPPHVF…KMAFLVENGK (135 aa)) folds into the Plastocyanin-like 3 domain. Positions 459, 462, and 464 each coordinate Cu cation. A glycan (N-linked (GlcNAc...) asparagine) is linked at Asn479. The Cu cation site is built by His521, Cys522, His523, and His527. Residue Asn545 is glycosylated (N-linked (GlcNAc...) asparagine).

Belongs to the multicopper oxidase family. The cofactor is Cu cation. As to expression, ubiquitous, with higher levels in the inflorescence stem.

Its subcellular location is the secreted. It localises to the extracellular space. The protein resides in the apoplast. The enzyme catalyses 4 hydroquinone + O2 = 4 benzosemiquinone + 2 H2O. Functionally, lignin degradation and detoxification of lignin-derived products. Required for secondary xylem cell wall lignification. In Arabidopsis thaliana (Mouse-ear cress), this protein is Laccase-4 (IRX12).